The following is a 110-amino-acid chain: uncharacterized protein (110 aa).

An N-terminal signal peptide occupies residues 1–23 (MKRITINIITMFIAAAVISLTGT).

This is an uncharacterized protein from Bacillus subtilis (strain 168).